Reading from the N-terminus, the 171-residue chain is ATP synthase subunit b (171 aa).

Residues 26–48 (LINLAIIIGLLVYAGRGFLGNLL) form a helical membrane-spanning segment.

The protein belongs to the ATPase B chain family. F-type ATPases have 2 components, F(1) - the catalytic core - and F(0) - the membrane proton channel. F(1) has five subunits: alpha(3), beta(3), gamma(1), delta(1), epsilon(1). F(0) has four main subunits: a(1), b(1), b'(1) and c(10-14). The alpha and beta chains form an alternating ring which encloses part of the gamma chain. F(1) is attached to F(0) by a central stalk formed by the gamma and epsilon chains, while a peripheral stalk is formed by the delta, b and b' chains.

The protein localises to the cellular thylakoid membrane. In terms of biological role, f(1)F(0) ATP synthase produces ATP from ADP in the presence of a proton or sodium gradient. F-type ATPases consist of two structural domains, F(1) containing the extramembraneous catalytic core and F(0) containing the membrane proton channel, linked together by a central stalk and a peripheral stalk. During catalysis, ATP synthesis in the catalytic domain of F(1) is coupled via a rotary mechanism of the central stalk subunits to proton translocation. Functionally, component of the F(0) channel, it forms part of the peripheral stalk, linking F(1) to F(0). This chain is ATP synthase subunit b, found in Synechococcus elongatus (strain ATCC 33912 / PCC 7942 / FACHB-805) (Anacystis nidulans R2).